The following is a 268-amino-acid chain: 3-deoxy-manno-octulosonate cytidylyltransferase (268 aa).

It belongs to the KdsB family.

It is found in the cytoplasm. It carries out the reaction 3-deoxy-alpha-D-manno-oct-2-ulosonate + CTP = CMP-3-deoxy-beta-D-manno-octulosonate + diphosphate. The protein operates within nucleotide-sugar biosynthesis; CMP-3-deoxy-D-manno-octulosonate biosynthesis; CMP-3-deoxy-D-manno-octulosonate from 3-deoxy-D-manno-octulosonate and CTP: step 1/1. Its pathway is bacterial outer membrane biogenesis; lipopolysaccharide biosynthesis. Functionally, activates KDO (a required 8-carbon sugar) for incorporation into bacterial lipopolysaccharide in Gram-negative bacteria. This chain is 3-deoxy-manno-octulosonate cytidylyltransferase, found in Ralstonia pickettii (strain 12J).